Here is a 477-residue protein sequence, read N- to C-terminus: UDP-N-acetylmuramate--L-alanine ligase (477 aa).

Residue 122 to 128 (GTHGKTT) participates in ATP binding.

The protein belongs to the MurCDEF family.

It is found in the cytoplasm. It catalyses the reaction UDP-N-acetyl-alpha-D-muramate + L-alanine + ATP = UDP-N-acetyl-alpha-D-muramoyl-L-alanine + ADP + phosphate + H(+). It functions in the pathway cell wall biogenesis; peptidoglycan biosynthesis. Cell wall formation. This chain is UDP-N-acetylmuramate--L-alanine ligase, found in Xanthomonas euvesicatoria pv. vesicatoria (strain 85-10) (Xanthomonas campestris pv. vesicatoria).